Here is a 541-residue protein sequence, read N- to C-terminus: Chaperonin GroEL 2 (541 aa).

Residues 29–32 (TLGP) and 86–90 (DGTTT) contribute to the ATP site. K132 participates in a covalent cross-link: Isoglutamyl lysine isopeptide (Lys-Gln) (interchain with Q-Cter in protein Pup). ATP-binding positions include G413, 476-478 (NAA), and D492.

The protein belongs to the chaperonin (HSP60) family. In terms of assembly, forms a cylinder of 14 subunits composed of two heptameric rings stacked back-to-back. Interacts with the co-chaperonin GroES.

It localises to the secreted. Its subcellular location is the capsule. It is found in the cell surface. The protein resides in the cell wall. It carries out the reaction ATP + H2O + a folded polypeptide = ADP + phosphate + an unfolded polypeptide.. Together with its co-chaperonin GroES, plays an essential role in assisting protein folding. The GroEL-GroES system forms a nano-cage that allows encapsulation of the non-native substrate proteins and provides a physical environment optimized to promote and accelerate protein folding. The protein is Chaperonin GroEL 2 of Mycolicibacterium smegmatis (strain ATCC 700084 / mc(2)155) (Mycobacterium smegmatis).